Here is a 1100-residue protein sequence, read N- to C-terminus: Guanylate cyclase 2G (1100 aa).

A signal peptide spans 1–43 (MASRTRSESPLEPRLYAGAGSRADHPSLVLMLSVVMLVTCLEA). Residues 44–481 (AKLTVGFHAP…VAGMTVTVTA (438 aa)) lie on the Extracellular side of the membrane. Residues asparagine 55, asparagine 85, asparagine 94, asparagine 217, asparagine 225, asparagine 238, asparagine 418, asparagine 440, and asparagine 443 are each glycosylated (N-linked (GlcNAc...) asparagine). Residues 482-502 (VIPTVTFLVLASAAAITGLML) form a helical membrane-spanning segment. Topologically, residues 503-1100 (WRLRGKVQSH…EEEAKVSEIL (598 aa)) are cytoplasmic. Residues 546-837 (SDTSTVKASA…EASPRGHVSI (292 aa)) enclose the Protein kinase domain. In terms of domain architecture, Guanylate cyclase spans 901 to 1031 (TIFFSDIVGF…DTVNMASRME (131 aa)).

It belongs to the adenylyl cyclase class-4/guanylyl cyclase family. As to quaternary structure, homooligomer. In vitro interacts with NPR1/GC-A. In terms of processing, N-glycosylated. As to expression, highly expressed in testis.

It localises to the cell membrane. The catalysed reaction is GTP = 3',5'-cyclic GMP + diphosphate. The chain is Guanylate cyclase 2G (Gucy2g) from Mus musculus (Mouse).